A 161-amino-acid polypeptide reads, in one-letter code: Thy-1 membrane glycoprotein (161 aa).

The signal sequence occupies residues 1–19 (MNLAISIALLLTVLQVSRG). Q20 is modified (pyrrolidone carboxylic acid). The Ig-like V-type domain occupies 20 to 126 (QKVTSLTACL…SQNVTVLRDK (107 aa)). 2 disulfide bridges follow: C28-C130 and C38-C104. N42 and N79 each carry an N-linked (GlcNAc...) asparagine glycan. At S82 the chain carries Phosphoserine. N-linked (GlcNAc...) asparagine glycosylation occurs at N119. A lipid anchor (GPI-anchor amidated cysteine; alternate) is attached at C130. A propeptide spans 131–161 (EGISLLAQNTSWLXLLLLSLSLLQATDFMSL) (removed in mature form). N139 carries an N-linked (GlcNAc...) asparagine glycan.

It localises to the cell membrane. May play a role in cell-cell or cell-ligand interactions during synaptogenesis and other events in the brain. In Macaca mulatta (Rhesus macaque), this protein is Thy-1 membrane glycoprotein (THY1).